The following is a 253-amino-acid chain: uncharacterized protein (253 aa).

The span at 175–184 (NPTQTSPGKP) shows a compositional bias: polar residues. The segment at 175–253 (NPTQTSPGKP…ATENEDRLPS (79 aa)) is disordered. At Ser-180 the chain carries Phosphoserine. 2 stretches are compositionally biased toward low complexity: residues 185 to 196 (STSESSQTDTST) and 203 to 214 (TPTTTRASSYTT). Over residues 215–242 (LVSTSNQVSNEAEASAVETSANQAQNTE) the composition is skewed to polar residues.

It belongs to the TRAPP small subunits family. BET3 subfamily.

This is an uncharacterized protein from Schizosaccharomyces pombe (strain 972 / ATCC 24843) (Fission yeast).